A 673-amino-acid polypeptide reads, in one-letter code: UvrABC system protein B (673 aa).

The Helicase ATP-binding domain maps to 26–414 (ANFEAGLAKQ…AGEVTELVVR (389 aa)). Residue 39–46 (GVTGSGKT) coordinates ATP. A Beta-hairpin motif is present at residues 92–115 (YYDYYQPEAYVPSSDTFIEKDSSI). One can recognise a Helicase C-terminal domain in the interval 431–597 (QVDDLMSEVH…SVERPIADIM (167 aa)). Composition is skewed to basic and acidic residues over residues 600–609 (ARDDAAEKKS) and 618–628 (HVAEETPDYRA). The interval 600–628 (ARDDAAEKKSGKGRSKSRHVAEETPDYRA) is disordered. The UVR domain occupies 635–670 (AGKLKSLEQKMYQHAKDLEFEAAAQIRDQIQKLKAA).

The protein belongs to the UvrB family. As to quaternary structure, forms a heterotetramer with UvrA during the search for lesions. Interacts with UvrC in an incision complex.

The protein resides in the cytoplasm. In terms of biological role, the UvrABC repair system catalyzes the recognition and processing of DNA lesions. A damage recognition complex composed of 2 UvrA and 2 UvrB subunits scans DNA for abnormalities. Upon binding of the UvrA(2)B(2) complex to a putative damaged site, the DNA wraps around one UvrB monomer. DNA wrap is dependent on ATP binding by UvrB and probably causes local melting of the DNA helix, facilitating insertion of UvrB beta-hairpin between the DNA strands. Then UvrB probes one DNA strand for the presence of a lesion. If a lesion is found the UvrA subunits dissociate and the UvrB-DNA preincision complex is formed. This complex is subsequently bound by UvrC and the second UvrB is released. If no lesion is found, the DNA wraps around the other UvrB subunit that will check the other stand for damage. The protein is UvrABC system protein B of Xanthomonas axonopodis pv. citri (strain 306).